A 57-amino-acid chain; its full sequence is UPF0391 membrane protein RPA3505 (57 aa).

Transmembrane regions (helical) follow at residues tryptophan 4–alanine 24 and isoleucine 30–isoleucine 50.

This sequence belongs to the UPF0391 family.

Its subcellular location is the cell membrane. The chain is UPF0391 membrane protein RPA3505 from Rhodopseudomonas palustris (strain ATCC BAA-98 / CGA009).